A 157-amino-acid polypeptide reads, in one-letter code: Isotocin-neurophysin IT 1 (157 aa).

Residues 1-20 form the signal peptide; it reads MFGTSVSALCLLFLLSVCTA. The cysteines at positions 21 and 26 are disulfide-linked. Gly29 carries the glycine amide modification. 7 disulfides stabilise this stretch: Cys42–Cys86, Cys45–Cys59, Cys53–Cys76, Cys60–Cys66, Cys93–Cys106, Cys100–Cys118, and Cys107–Cys112.

It belongs to the vasopressin/oxytocin family. In terms of processing, seven disulfide bonds are present in neurophysin.

The protein resides in the secreted. Functionally, isotocin causes contraction of smooth muscles. This chain is Isotocin-neurophysin IT 1, found in Oncorhynchus keta (Chum salmon).